Reading from the N-terminus, the 176-residue chain is MSRIGLKVINVPESVTVTKNGNEITVKGPKGELTREFDPRIKFEQEDGVIRFSRSNENDKAIHGTMRANLANMIEGVVNGYKKELKLIGVGYRAVAKNNVLTLNVGYSHPVEMKAPEGVTVTTSSATDVTIEGISKQVVGQFAAEIRAVRSPEPYKGKGIRYADEVVRRKEGKTGK.

Belongs to the universal ribosomal protein uL6 family. Part of the 50S ribosomal subunit.

Functionally, this protein binds to the 23S rRNA, and is important in its secondary structure. It is located near the subunit interface in the base of the L7/L12 stalk, and near the tRNA binding site of the peptidyltransferase center. The protein is Large ribosomal subunit protein uL6 of Lactobacillus delbrueckii subsp. bulgaricus (strain ATCC 11842 / DSM 20081 / BCRC 10696 / JCM 1002 / NBRC 13953 / NCIMB 11778 / NCTC 12712 / WDCM 00102 / Lb 14).